Consider the following 180-residue polypeptide: Ribulose bisphosphate carboxylase small subunit, chloroplastic 2 (180 aa).

A chloroplast-targeting transit peptide spans 1-56 (MASSVLSSAAVATVSRTPAQASMVAPFTGLKSTVGFPATKKNDDITSLASNGGRVQ).

The protein belongs to the RuBisCO small chain family. Heterohexadecamer of 8 large and 8 small subunits.

The protein resides in the plastid. The protein localises to the chloroplast. Functionally, ruBisCO catalyzes two reactions: the carboxylation of D-ribulose 1,5-bisphosphate, the primary event in carbon dioxide fixation, as well as the oxidative fragmentation of the pentose substrate. Both reactions occur simultaneously and in competition at the same active site. Although the small subunit is not catalytic it is essential for maximal activity. This chain is Ribulose bisphosphate carboxylase small subunit, chloroplastic 2, found in Spinacia oleracea (Spinach).